A 542-amino-acid chain; its full sequence is Chaperonin GroEL 2 (542 aa).

ATP-binding positions include 30–33 (TLGP), lysine 51, 87–91 (DGTTT), glycine 415, and aspartate 496.

The protein belongs to the chaperonin (HSP60) family. In terms of assembly, forms a cylinder of 14 subunits composed of two heptameric rings stacked back-to-back. Interacts with the co-chaperonin GroES.

The protein resides in the cytoplasm. It carries out the reaction ATP + H2O + a folded polypeptide = ADP + phosphate + an unfolded polypeptide.. Functionally, together with its co-chaperonin GroES, plays an essential role in assisting protein folding. The GroEL-GroES system forms a nano-cage that allows encapsulation of the non-native substrate proteins and provides a physical environment optimized to promote and accelerate protein folding. The protein is Chaperonin GroEL 2 of Rhizobium meliloti (strain 1021) (Ensifer meliloti).